The sequence spans 346 residues: 4-hydroxy-3-methylbut-2-enyl diphosphate reductase (346 aa).

Cys-19 is a [4Fe-4S] cluster binding site. Residues His-48 and His-84 each coordinate (2E)-4-hydroxy-3-methylbut-2-enyl diphosphate. His-48 and His-84 together coordinate dimethylallyl diphosphate. Isopentenyl diphosphate is bound by residues His-48 and His-84. Residue Cys-106 participates in [4Fe-4S] cluster binding. His-134 contacts (2E)-4-hydroxy-3-methylbut-2-enyl diphosphate. Position 134 (His-134) interacts with dimethylallyl diphosphate. Residue His-134 coordinates isopentenyl diphosphate. Glu-136 serves as the catalytic Proton donor. Thr-175 serves as a coordination point for (2E)-4-hydroxy-3-methylbut-2-enyl diphosphate. A [4Fe-4S] cluster-binding site is contributed by Cys-205. Residues Ser-233, Ser-234, Asn-235, and Ser-278 each contribute to the (2E)-4-hydroxy-3-methylbut-2-enyl diphosphate site. The dimethylallyl diphosphate site is built by Ser-233, Ser-234, Asn-235, and Ser-278. Isopentenyl diphosphate is bound by residues Ser-233, Ser-234, Asn-235, and Ser-278.

The protein belongs to the IspH family. [4Fe-4S] cluster is required as a cofactor.

The catalysed reaction is isopentenyl diphosphate + 2 oxidized [2Fe-2S]-[ferredoxin] + H2O = (2E)-4-hydroxy-3-methylbut-2-enyl diphosphate + 2 reduced [2Fe-2S]-[ferredoxin] + 2 H(+). It carries out the reaction dimethylallyl diphosphate + 2 oxidized [2Fe-2S]-[ferredoxin] + H2O = (2E)-4-hydroxy-3-methylbut-2-enyl diphosphate + 2 reduced [2Fe-2S]-[ferredoxin] + 2 H(+). It participates in isoprenoid biosynthesis; dimethylallyl diphosphate biosynthesis; dimethylallyl diphosphate from (2E)-4-hydroxy-3-methylbutenyl diphosphate: step 1/1. It functions in the pathway isoprenoid biosynthesis; isopentenyl diphosphate biosynthesis via DXP pathway; isopentenyl diphosphate from 1-deoxy-D-xylulose 5-phosphate: step 6/6. Functionally, catalyzes the conversion of 1-hydroxy-2-methyl-2-(E)-butenyl 4-diphosphate (HMBPP) into a mixture of isopentenyl diphosphate (IPP) and dimethylallyl diphosphate (DMAPP). Acts in the terminal step of the DOXP/MEP pathway for isoprenoid precursor biosynthesis. The sequence is that of 4-hydroxy-3-methylbut-2-enyl diphosphate reductase from Brucella melitensis biotype 1 (strain ATCC 23456 / CCUG 17765 / NCTC 10094 / 16M).